The sequence spans 448 residues: MSIQAIVLATFDAKEGYNVENYYPGDFNVEGIEYLLFPSGIQELDNCTIFFRFQDQLCLSVFSKLQHPSFERSAFFTSVGLILSDDINFGEAVVKYGETLLYIANGLSLATLKYKFGEDASETYASEKCTSHQLSDSDFFKSLQTSAVNLEFDSLFEKLQGNKFAILGANSKELSQSYATILLDHLGPAFYCLYKFALQRKRILLISSHDDQLYSIIDMIVRLSSIKRSSDASIPILLSDLHPFYSVGLANTSTLLDNDLEEGWIACTTDTVLLSKSSLYDLALYWPDNSFNANKYPQIFNSNSIRIKPSYDDLINFKGLSRYLSFDGESSWGLTTYSLASKYIFNTSHHNLTDQEFLNENMLDYFQRYNQKLLTVLSSNAESFNVSDMQTLGLNPCHSLDKSFVSEISQIWLKKHINWQYGKYFWLRRVSLIFLASTCFLFILWKLL.

The region spanning 4 to 155 is the uDENN domain; it reads QAIVLATFDA…SAVNLEFDSL (152 aa). The region spanning 183 to 326 is the cDENN domain; that stretch reads LDHLGPAFYC…FKGLSRYLSF (144 aa). Residues 328–428 enclose the dDENN domain; the sequence is GESSWGLTTY…WQYGKYFWLR (101 aa). The chain crosses the membrane as a helical span at residues 425–447; the sequence is FWLRRVSLIFLASTCFLFILWKL.

It is found in the golgi apparatus membrane. Its subcellular location is the endoplasmic reticulum membrane. This is an uncharacterized protein from Schizosaccharomyces pombe (strain 972 / ATCC 24843) (Fission yeast).